Reading from the N-terminus, the 152-residue chain is Probable prefoldin subunit 5 (152 aa).

The protein belongs to the prefoldin subunit alpha family. As to quaternary structure, heterohexamer of two PFD-alpha type and four PFD-beta type subunits.

Binds specifically to cytosolic chaperonin (c-CPN) and transfers target proteins to it. Binds to nascent polypeptide chain and promotes folding in an environment in which there are many competing pathways for nonnative proteins. The sequence is that of Probable prefoldin subunit 5 (pfd-5) from Caenorhabditis elegans.